The primary structure comprises 327 residues: uncharacterized protein (327 aa).

Residues 12 to 79 (KRIDEFLAKE…LKKELDLEIE (68 aa)) form the S4 RNA-binding domain. Residue aspartate 136 is part of the active site.

It belongs to the pseudouridine synthase RluA family.

The enzyme catalyses a uridine in RNA = a pseudouridine in RNA. This is an uncharacterized protein from Helicobacter pylori (strain J99 / ATCC 700824) (Campylobacter pylori J99).